The sequence spans 99 residues: uncharacterized protein (99 aa).

3 helical membrane passes run 7–29 (FFIS…YTLY), 39–61 (FISS…ARYN), and 68–90 (FCNL…LWLL).

The protein localises to the cell membrane. This is an uncharacterized protein from Archaeoglobus fulgidus (strain ATCC 49558 / DSM 4304 / JCM 9628 / NBRC 100126 / VC-16).